The primary structure comprises 205 residues: Gap junction epsilon-1 protein (205 aa).

The Cytoplasmic portion of the chain corresponds to 1 to 22 (MSLNYIKNFYEGCVKPPTVIGQ). Residues 23–43 (FHTLFFGSVRMFFLGVLGFAV) traverse the membrane as a helical segment. The Extracellular portion of the chain corresponds to 44-74 (YGNEALHFSCDPDKREINLFCYNQFRPITPQ). 2 disulfides stabilise this stretch: Cys53–Cys161 and Cys64–Cys147. A helical membrane pass occupies residues 75 to 95 (VFWALQLVIVLLPGAIFHLYA). Residues 96-111 (ACKSINQDCILQKPVY) are Cytoplasmic-facing. Residues 112–132 (TVIYVLSVLLRISLEVFAFWL) traverse the membrane as a helical segment. The Extracellular segment spans residues 133 to 170 (QIHLFGFQVKPIYLCDTESLGKKPNILKCMVPEHFEKT). A helical membrane pass occupies residues 171–191 (IFLIAMYTFTVITMVLCVAEV). At 192–205 (FEIIFRRSCFLFKR) the chain is on the cytoplasmic side.

This sequence belongs to the connexin family. Beta-type (group I) subfamily. A connexon is composed of a hexamer of connexins. As to expression, highly expressed in lens, where it is mainly found in lens fibers and to a lesser extent in lens epithelium. Weakly expressed in retina. Not detected in other tissues tested.

The protein localises to the cell membrane. Mediates calcium-independent ATP release, suggesting activity as a hemichannel. Does not form functional gap junctions. May play a non-essential role in eye lens development. The protein is Gap junction epsilon-1 protein of Mus musculus (Mouse).